A 110-amino-acid chain; its full sequence is uncharacterized protein (110 aa).

This is an uncharacterized protein from Archaeoglobus fulgidus (strain ATCC 49558 / DSM 4304 / JCM 9628 / NBRC 100126 / VC-16).